Here is a 178-residue protein sequence, read N- to C-terminus: Large ribosomal subunit protein uL6 (178 aa).

Belongs to the universal ribosomal protein uL6 family. In terms of assembly, part of the 50S ribosomal subunit.

Its function is as follows. This protein binds to the 23S rRNA, and is important in its secondary structure. It is located near the subunit interface in the base of the L7/L12 stalk, and near the tRNA binding site of the peptidyltransferase center. This Leifsonia xyli subsp. xyli (strain CTCB07) protein is Large ribosomal subunit protein uL6.